The chain runs to 178 residues: Oligoribonuclease (178 aa).

The 162-residue stretch at Leu-7–Leu-168 folds into the Exonuclease domain. Tyr-128 is a catalytic residue.

This sequence belongs to the oligoribonuclease family.

The protein localises to the cytoplasm. 3'-to-5' exoribonuclease specific for small oligoribonucleotides. The polypeptide is Oligoribonuclease (Francisella tularensis subsp. holarctica (strain FTNF002-00 / FTA)).